A 626-amino-acid chain; its full sequence is MAIFSNQMRLSSTLLKRLHQRVAAAVNSSSSRNFTTTEGHRPTIVHKRSLDILHDPWFNKGTAFSFTERDRLHIRGLLPPNVMSFEQQIARFMADLKRLEVQARDGPSDPYVLAKWRILNRLHDRNETLYYKVLMENIEEYAPIVYTPTVGLVCQKYSGLFRRPRGMYFSAEDRGEMMSMVYNWPADQVDMIVVTDGSRILGLGDLGIQGIGIAIGKLDLYVAAAGINPQRVLPVMIDVGTDNENLLKDPLYLGLQDHRLDGEEYIEVIDEFMEAVFTRWPHVIVQFEDFQSKWAFKLLQRYRNNYRMFNDDIQGTAGVAIAGLLGAVRAQGRPMIDFPKMKIVVAGAGSAGIGVLNAARKTMARMLGNTEIAFESARSQFWVVDAKGLITEARENVDPDARPFARKIKEIERQGLSEGATLAEVVREVKPDVLLGLSACGGLFSKEVLEALKHSTSTRPAIFPMSNPTRNAECTPEEAFSILGENIIFASGSPFKDVDLGNGHVGHCNQANNMFLFPGIGLGTLLSGSRIVSDGMLQAAAECLAAYITEEEVLKGIIYPSISRIRDITKEVAAAVVKEAIEEDLAEGYREMDSRELRKLDEAQISEFVENNMWSPDYPTLVYKKD.

A mitochondrion-targeting transit peptide spans 1-34 (MAIFSNQMRLSSTLLKRLHQRVAAAVNSSSSRNF). Residues R91 and R125 each contribute to the fumarate site. Y146 serves as the catalytic Proton donor. Residue R199 coordinates (S)-malate. NAD(+) is bound at residue R199. The Proton acceptor role is filled by K217. Residues E288, D289, and D312 each contribute to the a divalent metal cation site. The NAD(+) site is built by A348 and A351. Residues N467 and N512 each coordinate (S)-malate.

This sequence belongs to the malic enzymes family. As to quaternary structure, heterodimer of two related subunits. Requires Mg(2+) as cofactor. Mn(2+) serves as cofactor.

The protein localises to the mitochondrion matrix. It carries out the reaction (S)-malate + NAD(+) = pyruvate + CO2 + NADH. This chain is NAD-dependent malic enzyme, mitochondrial, found in Solanum tuberosum (Potato).